The primary structure comprises 502 residues: MFCLPQQESTAPTTCTGSASTQDMDSGYGDGLQGECLRKPDQTQPKLYGVGDPTATFSSDSSCLSSRGRVIKWFWDSAEEGYRTYHMDEYDEDKNPSGIINLGTSENKLCFDLLSWRLTQGDMLHVEPSLLQYPDWRGHLFLREEVAKFLSFYCKSPAPLKPENVVVLNGCASLFSALATVLCEAGEALLIPTPYYGAITQHIYLYGNVRLAYVYLDSKVTGLNTRPFQLTVEKLEMVLQGVSSEGVKVKGLILINPQNPLGDVYSPEELQDFLRFAMRHKLHVIMDEVYMLSVFEESLGYRSVLSLERLPDPQRTHVMWATSKDFGMSGLRFGVLYTENQHVATAVASLCRYHGLSGLVQHQMAQLLRDHDWISQVYLPENHARLKAAHTYVSEELRALGIPFVSRGAGFFIWVDLRKYLCKGTFEEEALLWRQFLDNKVLLSSGKTFECKEPGWFRVVFSDKENRLRLGMQRMRQVLEGQSQVVEDASPCHAQEPQSQPR.

Residues 1–24 (MFCLPQQESTAPTTCTGSASTQDM) are disordered. Residue E106 participates in substrate binding. K324 carries the post-translational modification N6-(pyridoxal phosphate)lysine.

This sequence belongs to the class-I pyridoxal-phosphate-dependent aminotransferase family.

In terms of biological role, does not catalyze the synthesis of 1-aminocyclopropane-1-carboxylate but is capable of catalyzing the deamination of L-vinylglycine. This chain is 1-aminocyclopropane-1-carboxylate synthase-like protein 1 (Accs), found in Mus musculus (Mouse).